The sequence spans 273 residues: Dermonecrotic toxin LspaSicTox-alphaIA1iii (273 aa).

Residue His-5 is part of the active site. Residues Glu-25 and Asp-27 each contribute to the Mg(2+) site. His-41 functions as the Nucleophile in the catalytic mechanism. 2 disulfide bridges follow: Cys-45–Cys-51 and Cys-47–Cys-190. Residue Asp-85 coordinates Mg(2+).

It belongs to the arthropod phospholipase D family. Class II subfamily. Mg(2+) serves as cofactor. In terms of tissue distribution, expressed by the venom gland.

It is found in the secreted. It carries out the reaction an N-(acyl)-sphingosylphosphocholine = an N-(acyl)-sphingosyl-1,3-cyclic phosphate + choline. It catalyses the reaction an N-(acyl)-sphingosylphosphoethanolamine = an N-(acyl)-sphingosyl-1,3-cyclic phosphate + ethanolamine. The catalysed reaction is a 1-acyl-sn-glycero-3-phosphocholine = a 1-acyl-sn-glycero-2,3-cyclic phosphate + choline. The enzyme catalyses a 1-acyl-sn-glycero-3-phosphoethanolamine = a 1-acyl-sn-glycero-2,3-cyclic phosphate + ethanolamine. Dermonecrotic toxins cleave the phosphodiester linkage between the phosphate and headgroup of certain phospholipids (sphingolipid and lysolipid substrates), forming an alcohol (often choline) and a cyclic phosphate. This toxin acts on sphingomyelin (SM). It may also act on ceramide phosphoethanolamine (CPE), lysophosphatidylcholine (LPC) and lysophosphatidylethanolamine (LPE), but not on lysophosphatidylserine (LPS), and lysophosphatidylglycerol (LPG). It acts by transphosphatidylation, releasing exclusively cyclic phosphate products as second products. Induces dermonecrosis, hemolysis, increased vascular permeability, edema, inflammatory response, and platelet aggregation. This is Dermonecrotic toxin LspaSicTox-alphaIA1iii from Loxosceles spadicea (Recluse spider).